We begin with the raw amino-acid sequence, 481 residues long: 3-isopropylmalate dehydratase large subunit (481 aa).

3 residues coordinate [4Fe-4S] cluster: cysteine 363, cysteine 423, and cysteine 426. Residues 432-459 (DQLKPGERSASTSNRNFEGRQGPGGRTH) form a disordered region.

This sequence belongs to the aconitase/IPM isomerase family. LeuC type 1 subfamily. In terms of assembly, heterodimer of LeuC and LeuD. [4Fe-4S] cluster serves as cofactor.

The enzyme catalyses (2R,3S)-3-isopropylmalate = (2S)-2-isopropylmalate. Its pathway is amino-acid biosynthesis; L-leucine biosynthesis; L-leucine from 3-methyl-2-oxobutanoate: step 2/4. In terms of biological role, catalyzes the isomerization between 2-isopropylmalate and 3-isopropylmalate, via the formation of 2-isopropylmaleate. The protein is 3-isopropylmalate dehydratase large subunit of Corynebacterium glutamicum (strain ATCC 13032 / DSM 20300 / JCM 1318 / BCRC 11384 / CCUG 27702 / LMG 3730 / NBRC 12168 / NCIMB 10025 / NRRL B-2784 / 534).